Reading from the N-terminus, the 638-residue chain is NBPF family member NBPF6 (638 aa).

Coiled coils occupy residues 10 to 43 (SERAEMNILEINQELRSQLAESNQQFRDLKEKFL) and 69 to 115 (DSVL…KLRE). Residues 157–285 (HLVHKLSPEN…VPPRHHDKSN (129 aa)) are disordered. A compositionally biased stretch (acidic residues) spans 165-179 (ENDEDEDEDEDDKDE). Positions 174 to 261 (EDDKDEEVEK…EEEEALNIPP (88 aa)) constitute an Olduvai 1 domain. Residues 192–202 (EVQKTEEKEVP) are compositionally biased toward basic and acidic residues. Positions 214-226 (SNSHNPSNSNQPH) are enriched in low complexity. Basic and acidic residues-rich tracts occupy residues 232-251 (TFKEHEVDSALVVESEHPHD) and 264-273 (QNDHEEEEGK). 2 consecutive Olduvai domains span residues 326–399 (EKQS…ALVD) and 400–503 (KIKK…SQAQ). The tract at residues 563-584 (MKNPPQLEDDALEGSASNTQGR) is disordered.

This sequence belongs to the NBPF family.

Its subcellular location is the cytoplasm. The polypeptide is NBPF family member NBPF6 (Homo sapiens (Human)).